Here is a 60-residue protein sequence, read N- to C-terminus: Potassium channel toxin alpha-KTx 29.2 (60 aa).

A signal peptide spans methionine 1–alanine 28. Cystine bridges form between cysteine 32–cysteine 51, cysteine 40–cysteine 56, and cysteine 44–cysteine 58.

This sequence belongs to the short scorpion toxin superfamily. Potassium channel inhibitor family. Alpha-KTx 29 subfamily. As to expression, expressed by the venom gland.

The protein localises to the secreted. Weakly inhibits the Kv1.3/KCNA3 channel (1 uM of thetoxin inhibits currents by 13.2%) and Kv7.1/KCNQ1 channel (10 uM of the toxin inhibits currents by 27.7%). The sequence is that of Potassium channel toxin alpha-KTx 29.2 from Lychas mucronatus (Chinese swimming scorpion).